We begin with the raw amino-acid sequence, 605 residues long: Alpha-1,3-galactosidase A (605 aa).

A signal peptide spans 1–20 (MKKYLHILPACFLFYAAAHA). PbH1 repeat units follow at residues 256–278 (SKNI…VSQY), 312–334 (KGKV…NVHG), 421–443 (TPEV…LVTT), 444–466 (PRKV…LIEA), 477–507 (VKDV…HPSN), and 517–547 (HQNI…LFRN).

This sequence belongs to the glycosyl hydrolase 110 family. A subfamily.

The catalysed reaction is Hydrolysis of terminal, non-reducing branched (1-&gt;3)-alpha-D-galactosidic residues, producing free D-galactose.. It catalyses the reaction Hydrolysis of terminal, non-reducing alpha-D-galactose residues in alpha-D-galactosides, including galactose oligosaccharides, galactomannans and galactolipids.. Functionally, alpha-galactosidase that specifically removes branched alpha-1,3-linked galactose residues present in blood group B antigens. Has no activity toward linear alpha-1,3-linked galactose residues. The polypeptide is Alpha-1,3-galactosidase A (glaA) (Bacteroides fragilis (strain ATCC 25285 / DSM 2151 / CCUG 4856 / JCM 11019 / LMG 10263 / NCTC 9343 / Onslow / VPI 2553 / EN-2)).